We begin with the raw amino-acid sequence, 403 residues long: CCA-adding enzyme (403 aa).

ATP is bound by residues glycine 32 and arginine 35. Positions 32 and 35 each coordinate CTP. The Mg(2+) site is built by aspartate 45 and aspartate 47. Arginine 116, aspartate 159, arginine 162, arginine 165, and arginine 168 together coordinate ATP. Arginine 116, aspartate 159, arginine 162, arginine 165, and arginine 168 together coordinate CTP.

Belongs to the tRNA nucleotidyltransferase/poly(A) polymerase family. Bacterial CCA-adding enzyme type 3 subfamily. As to quaternary structure, homodimer. Mg(2+) is required as a cofactor.

The enzyme catalyses a tRNA precursor + 2 CTP + ATP = a tRNA with a 3' CCA end + 3 diphosphate. It catalyses the reaction a tRNA with a 3' CCA end + 2 CTP + ATP = a tRNA with a 3' CCACCA end + 3 diphosphate. Catalyzes the addition and repair of the essential 3'-terminal CCA sequence in tRNAs without using a nucleic acid template. Adds these three nucleotides in the order of C, C, and A to the tRNA nucleotide-73, using CTP and ATP as substrates and producing inorganic pyrophosphate. tRNA 3'-terminal CCA addition is required both for tRNA processing and repair. Also involved in tRNA surveillance by mediating tandem CCA addition to generate a CCACCA at the 3' terminus of unstable tRNAs. While stable tRNAs receive only 3'-terminal CCA, unstable tRNAs are marked with CCACCA and rapidly degraded. The chain is CCA-adding enzyme from Streptococcus suis (strain 98HAH33).